Here is a 430-residue protein sequence, read N- to C-terminus: Enolase (430 aa).

Q163 serves as a coordination point for (2R)-2-phosphoglycerate. The active-site Proton donor is the E205. 3 residues coordinate Mg(2+): D242, E288, and D315. K340, R369, S370, and K391 together coordinate (2R)-2-phosphoglycerate. K340 functions as the Proton acceptor in the catalytic mechanism.

Belongs to the enolase family. Requires Mg(2+) as cofactor.

Its subcellular location is the cytoplasm. The protein resides in the secreted. It is found in the cell surface. It catalyses the reaction (2R)-2-phosphoglycerate = phosphoenolpyruvate + H2O. Its pathway is carbohydrate degradation; glycolysis; pyruvate from D-glyceraldehyde 3-phosphate: step 4/5. In terms of biological role, catalyzes the reversible conversion of 2-phosphoglycerate (2-PG) into phosphoenolpyruvate (PEP). It is essential for the degradation of carbohydrates via glycolysis. This chain is Enolase, found in Phytoplasma australiense.